The chain runs to 147 residues: NADH-quinone oxidoreductase subunit A (147 aa).

3 helical membrane-spanning segments follow: residues 11-31, 68-88, and 93-113; these read IWPL…VMAL, LIAV…AWAV, and LGWP…AALA.

The protein belongs to the complex I subunit 3 family. As to quaternary structure, NDH-1 is composed of 14 different subunits. Subunits NuoA, H, J, K, L, M, N constitute the membrane sector of the complex.

Its subcellular location is the cell inner membrane. The catalysed reaction is a quinone + NADH + 5 H(+)(in) = a quinol + NAD(+) + 4 H(+)(out). In terms of biological role, NDH-1 shuttles electrons from NADH, via FMN and iron-sulfur (Fe-S) centers, to quinones in the respiratory chain. The immediate electron acceptor for the enzyme in this species is believed to be ubiquinone. Couples the redox reaction to proton translocation (for every two electrons transferred, four hydrogen ions are translocated across the cytoplasmic membrane), and thus conserves the redox energy in a proton gradient. The protein is NADH-quinone oxidoreductase subunit A of Nitrosospira multiformis (strain ATCC 25196 / NCIMB 11849 / C 71).